The primary structure comprises 418 residues: Glutamyl-tRNA reductase (418 aa).

Residues 49–52, serine 107, 112–114, and glutamine 118 each bind substrate; these read TCNR and EPQ. Catalysis depends on cysteine 50, which acts as the Nucleophile. 187–192 is a binding site for NADP(+); sequence GAGETI.

The protein belongs to the glutamyl-tRNA reductase family. As to quaternary structure, homodimer.

It catalyses the reaction (S)-4-amino-5-oxopentanoate + tRNA(Glu) + NADP(+) = L-glutamyl-tRNA(Glu) + NADPH + H(+). It participates in porphyrin-containing compound metabolism; protoporphyrin-IX biosynthesis; 5-aminolevulinate from L-glutamyl-tRNA(Glu): step 1/2. Its function is as follows. Catalyzes the NADPH-dependent reduction of glutamyl-tRNA(Glu) to glutamate 1-semialdehyde (GSA). This chain is Glutamyl-tRNA reductase, found in Pseudoalteromonas translucida (strain TAC 125).